A 569-amino-acid chain; its full sequence is Carboxylesterase 3 (569 aa).

Positions 1–24 (MRLHRLRARLNAVAFGLLLLLVHG) are cleaved as a signal peptide. Cys95 and Cys122 are disulfide-bonded. An N-linked (GlcNAc...) asparagine glycan is attached at Asn103. Residue Ser227 is the Acyl-ester intermediate of the active site. Cys279 and Cys290 are joined by a disulfide. Catalysis depends on charge relay system residues Glu345 and His458. Residues 566 to 569 (QEDL) carry the Prevents secretion from ER motif.

This sequence belongs to the type-B carboxylesterase/lipase family. N-glycosylated.

It is found in the endoplasmic reticulum lumen. The catalysed reaction is a carboxylic ester + H2O = an alcohol + a carboxylate + H(+). Functionally, involved in the detoxification of xenobiotics and in the activation of ester and amide prodrugs. This is Carboxylesterase 3 (CES3) from Pongo abelii (Sumatran orangutan).